The chain runs to 195 residues: MKSLEELYNRAIEMKNKGMSDKEISTELHLSVNTVTWLLSKEFVNERSAKDVKIGWRSAGVFGSRIGSLAEIMIDIAEEESNKMNLNIDAFLGITINGIPFATLASYMTGKELIVYRPHPSRKEGFFSSNFASVVNKNVVIMDDVVSTGETMKRTIEDVKKSGGKPVLCIVIASKLNIDEINGVKIRAIMRTVMV.

It belongs to the purine/pyrimidine phosphoribosyltransferase family. GfcR subfamily.

This chain is Transcriptional regulator GfcR, found in Picrophilus torridus (strain ATCC 700027 / DSM 9790 / JCM 10055 / NBRC 100828 / KAW 2/3).